The chain runs to 507 residues: Cobyric acid synthase (507 aa).

Positions 251–448 (DIDIAVVHLP…LHGLFDSDAF (198 aa)) constitute a GATase cobBQ-type domain. Cys332 serves as the catalytic Nucleophile. His440 is a catalytic residue.

Belongs to the CobB/CobQ family. CobQ subfamily.

It participates in cofactor biosynthesis; adenosylcobalamin biosynthesis. Functionally, catalyzes amidations at positions B, D, E, and G on adenosylcobyrinic A,C-diamide. NH(2) groups are provided by glutamine, and one molecule of ATP is hydrogenolyzed for each amidation. This is Cobyric acid synthase from Klebsiella pneumoniae (strain 342).